The primary structure comprises 91 residues: Small ribosomal subunit protein uS19 (91 aa).

The protein belongs to the universal ribosomal protein uS19 family.

In terms of biological role, protein S19 forms a complex with S13 that binds strongly to the 16S ribosomal RNA. In Alcanivorax borkumensis (strain ATCC 700651 / DSM 11573 / NCIMB 13689 / SK2), this protein is Small ribosomal subunit protein uS19.